Consider the following 157-residue polypeptide: Phosphopantetheine adenylyltransferase (157 aa).

Thr8 contacts substrate. Residues 8-9 and His16 each bind ATP; that span reads TF. Residues Lys40, Thr72, and Arg86 each contribute to the substrate site. ATP-binding positions include 87 to 89, Glu97, and 122 to 128; these read GLR and YSFLSSS.

It belongs to the bacterial CoaD family. Homohexamer. Requires Mg(2+) as cofactor.

It localises to the cytoplasm. The enzyme catalyses (R)-4'-phosphopantetheine + ATP + H(+) = 3'-dephospho-CoA + diphosphate. The protein operates within cofactor biosynthesis; coenzyme A biosynthesis; CoA from (R)-pantothenate: step 4/5. Its function is as follows. Reversibly transfers an adenylyl group from ATP to 4'-phosphopantetheine, yielding dephospho-CoA (dPCoA) and pyrophosphate. The chain is Phosphopantetheine adenylyltransferase from Prochlorococcus marinus (strain MIT 9215).